We begin with the raw amino-acid sequence, 103 residues long: Large ribosomal subunit protein bL21 (103 aa).

Belongs to the bacterial ribosomal protein bL21 family. Part of the 50S ribosomal subunit. Contacts protein L20.

This protein binds to 23S rRNA in the presence of protein L20. This is Large ribosomal subunit protein bL21 from Mycobacterium sp. (strain JLS).